Reading from the N-terminus, the 332-residue chain is MAESRSNRAAVQATNDDASASKLSCVKKGYMKDDYVHLFVKRPVRRSPIINRGYFSRWAAFRKLMSQFLLSGTSSKKQILSLGAGFDTTYFQLLDEGNGPNLYVELDFKEVTSKKAAVIQNSSQLRDKLGANASISIDEGQVLSDHYKLLPVDLRDIPKLRDVISFADMDLSLPTFIIAECVLIYLDPDSSRAIVNWSSKTFSTAVFFLYEQIHPDDAFGHQMIRNLESRGCALLSIDASPTLLAKERLFLDNGWQRAVAWDMLKVYGSFVDTQEKRRIERLELFDEFEEWHMMQEHYCVTYAVNDAMGIFGDFGFTREGGGERMSSSASSP.

S-adenosyl-L-methionine is bound by residues Lys22, Arg57, Gly83, Asp107, 153 to 154, and Glu180; that span reads DL.

This sequence belongs to the methyltransferase superfamily. LCMT family.

It is found in the cytoplasm. The protein localises to the membrane. The catalysed reaction is [phosphatase 2A protein]-C-terminal L-leucine + S-adenosyl-L-methionine = [phosphatase 2A protein]-C-terminal L-leucine methyl ester + S-adenosyl-L-homocysteine. Functionally, methylates the carboxyl group of the C-terminal leucine residue of protein phosphatase 2A (PP2A) catalytic subunits to form alpha-leucine ester residues. Involved in brassinosteroid (BR) signaling. Plays a negative role in BR signaling pathway. Functions as a positive regulator of BRI1 receptor-kinase degradation. Methylates PP2A, thus facilitating its association with activated BRI1. This leads to receptor dephosphorylation and degradation, and thus to the termination of BR signaling. May act upstream of ASK7/BIN2. Involved in methylation of PP2A during environmental stress responses. This chain is Leucine carboxyl methyltransferase 1 homolog, found in Arabidopsis thaliana (Mouse-ear cress).